The chain runs to 886 residues: Inter-alpha-trypsin inhibitor heavy chain H3 (886 aa).

The signal sequence occupies residues 1–18 (MWWPYLVLALLSGLEASG). Residues 19–30 (FPRSPLRLLGKR) constitute a propeptide that is removed on maturation. The 130-residue stretch at 26 to 155 (LLGKRSLPEG…KVTFELTYEE (130 aa)) folds into the VIT domain. Asn-88 carries N-linked (GlcNAc...) asparagine glycosylation. One can recognise a VWFA domain in the interval 279–439 (PKNIVFVIDI…YNFLETMALE (161 aa)). N-linked (GlcNAc...) asparagine glycosylation is present at Asn-577. Asp-646 bears the Aspartate 1-(chondroitin 4-sulfate)-ester mark. A propeptide spanning residues 647–886 (PHFIIQVPGK…HTDYIVPSLF (240 aa)) is cleaved from the precursor.

The protein belongs to the ITIH family. As to quaternary structure, I-alpha-I plasma protease inhibitors are assembled from one or two heavy chains (HC) and one light chain, bikunin. Pre-alpha-inhibitor (P-alpha-I) is composed of ITIH3/HC3 and bikunin. Heavy chains are linked to bikunin via chondroitin 4-sulfate esterified to the alpha-carboxyl of the C-terminal aspartate after propeptide cleavage.

The protein localises to the secreted. Functionally, may act as a carrier of hyaluronan in serum or as a binding protein between hyaluronan and other matrix protein, including those on cell surfaces in tissues to regulate the localization, synthesis and degradation of hyaluronan which are essential to cells undergoing biological processes. This chain is Inter-alpha-trypsin inhibitor heavy chain H3 (ITIH3), found in Mesocricetus auratus (Golden hamster).